The chain runs to 515 residues: MVSIPEYYEGKNVLLTGATGFLGKVLLEKLLRSCPKVNSVYVLVRQKAGQTPQERVEEVLSGKLFDRLRDENPDFREKIIAINSELTQPKLALSEEDKEVIIDSTNIIFHCAATVRFNENLRDAVQLNVIATRQLILLAQQMKNLEVFMHVSTAYAYCNRKHIDEVVYPPPVDPKKLIDSLEWMDDGLVNDITPKLIGDRPNTYIYTKALAEYVVQQEGAKLNVAIVRPSIVGASWKEPFPGWIDNFNGPSGLFIAAGKGILRTIRASNNALADLVPVDVVVNMSLAAAWYSGVNRPRNIMVYNCTTGSTNPFHWGEVEYHVISTFKRNPLEQAFRRPNVNLTSNHLLYHYWIAVSHKAPAFLYDIYLRMTGRSPRMMKTITRLHKAMVFLEYFTSNSWVWNTENVNMLMNQLNPEDKKTFNIDVRQLHWAEYIENYCLGTKKYVLNEEMSGLPAARKHLNKLRNIRYGFNTILVILIWRIFIARSQMARNIWYFVVSLCYKFLSYFRASSTMRY.

At 1–465 (MVSIPEYYEG…ARKHLNKLRN (465 aa)) the chain is on the cytoplasmic side. A necessary and sufficient for PEX19-mediated localization into peroxisome membrane region spans residues 451-507 (SGLPAARKHLNKLRNIRYGFNTILVILIWRIFIARSQMARNIWYFVVSLCYKFLSYF). Residues 466-483 (IRYGFNTILVILIWRIFI) traverse the membrane as a helical segment. The Peroxisomal segment spans residues 484–515 (ARSQMARNIWYFVVSLCYKFLSYFRASSTMRY).

The protein belongs to the fatty acyl-CoA reductase family. As to quaternary structure, interacts with PEX19; PEX19 mediates the targeting of FAR1 to peroxisomes.

The protein resides in the peroxisome membrane. The enzyme catalyses a long-chain fatty acyl-CoA + 2 NADPH + 2 H(+) = a long-chain primary fatty alcohol + 2 NADP(+) + CoA. It catalyses the reaction hexadecanoyl-CoA + 2 NADPH + 2 H(+) = hexadecan-1-ol + 2 NADP(+) + CoA. The catalysed reaction is octadecanoyl-CoA + 2 NADPH + 2 H(+) = octadecan-1-ol + 2 NADP(+) + CoA. It carries out the reaction eicosanoyl-CoA + 2 NADPH + 2 H(+) = eicosan-1-ol + 2 NADP(+) + CoA. The enzyme catalyses (9Z)-octadecenoyl-CoA + 2 NADPH + 2 H(+) = (9Z)-octadecen-1-ol + 2 NADP(+) + CoA. It catalyses the reaction (9Z,12Z)-octadecadienoyl-CoA + 2 NADPH + 2 H(+) = (9Z,12Z)-octadecadien-1-ol + 2 NADP(+) + CoA. The catalysed reaction is 16-methylheptadecanoyl-CoA + 2 NADPH + 2 H(+) = 16-methylheptadecan-1-ol + 2 NADP(+) + CoA. It carries out the reaction 18-methylnonadecanoyl-CoA + 2 NADPH + 2 H(+) = 18-methylnonadecan-1-ol + 2 NADP(+) + CoA. Functionally, catalyzes the reduction of saturated and unsaturated C16 or C18 fatty acyl-CoA to fatty alcohols. It plays an essential role in the production of ether lipids/plasmalogens which synthesis requires fatty alcohols. In parallel, it is also required for wax monoesters production since fatty alcohols also constitute a substrate for their synthesis. The sequence is that of Fatty acyl-CoA reductase 1 from Homo sapiens (Human).